A 286-amino-acid chain; its full sequence is Ribosome-inactivating protein momordin I (286 aa).

A signal peptide spans 1–23 (MSRFSVLSFLILAIFLGGSIVKG). Glutamate 183 is an active-site residue. Asparagine 250 carries N-linked (GlcNAc...) asparagine glycosylation. Positions 270 to 286 (AEGDNGDVSTTHGFSSY) are cleaved as a propeptide — removed in mature form.

It belongs to the ribosome-inactivating protein family. Type 1 RIP subfamily.

The enzyme catalyses Endohydrolysis of the N-glycosidic bond at one specific adenosine on the 28S rRNA.. This chain is Ribosome-inactivating protein momordin I, found in Momordica charantia (Bitter gourd).